The chain runs to 329 residues: Gibberellin 2-beta-dioxygenase 1 (329 aa).

Residues 165–273 (NTDSILRLNH…RVSMIYFAGP (109 aa)) form the Fe2OG dioxygenase domain. Residues His-197, Asp-199, and His-254 each coordinate Fe cation. Arg-264 is an active-site residue. Arg-264 contributes to the 2-oxoglutarate binding site.

This sequence belongs to the iron/ascorbate-dependent oxidoreductase family. GA2OX subfamily. Fe(2+) is required as a cofactor. Preferentially expressed in flowers, siliques, and upper stems. Not expressed in the apex.

It catalyses the reaction gibberellin A1 + 2-oxoglutarate + O2 = gibberellin A8 + succinate + CO2. It participates in plant hormone biosynthesis; gibberellin biosynthesis. In terms of biological role, catalyzes the 2-beta-hydroxylation of several biologically active gibberellins, leading to the homeostatic regulation of their endogenous level. Catabolism of gibberellins (GAs) plays a central role in plant development. Converts GA9/GA20 to GA51/GA29 and GA4/GA1 to GA34/GA8. The sequence is that of Gibberellin 2-beta-dioxygenase 1 (GA2OX1) from Arabidopsis thaliana (Mouse-ear cress).